The primary structure comprises 122 residues: Large ribosomal subunit protein bL12 (122 aa).

Belongs to the bacterial ribosomal protein bL12 family. In terms of assembly, homodimer. Part of the ribosomal stalk of the 50S ribosomal subunit. Forms a multimeric L10(L12)X complex, where L10 forms an elongated spine to which 2 to 4 L12 dimers bind in a sequential fashion. Binds GTP-bound translation factors.

In terms of biological role, forms part of the ribosomal stalk which helps the ribosome interact with GTP-bound translation factors. Is thus essential for accurate translation. The polypeptide is Large ribosomal subunit protein bL12 (Streptococcus mutans serotype c (strain ATCC 700610 / UA159)).